We begin with the raw amino-acid sequence, 356 residues long: Tyrosine recombinase XerS (356 aa).

The Core-binding (CB) domain maps to Ile16–Thr121. A Tyr recombinase domain is found at Glu169–Asp354. Active-site residues include Arg210, Lys234, His306, Arg309, and His332. Residue Tyr341 is the O-(3'-phospho-DNA)-tyrosine intermediate of the active site.

It belongs to the 'phage' integrase family. XerS subfamily.

The protein resides in the cytoplasm. FtsK is required for recombination. In terms of biological role, site-specific tyrosine recombinase, which acts by catalyzing the cutting and rejoining of the recombining DNA molecules. Essential to convert dimers of the bacterial chromosome into monomers to permit their segregation at cell division. This chain is Tyrosine recombinase XerS, found in Streptococcus uberis (strain ATCC BAA-854 / 0140J).